We begin with the raw amino-acid sequence, 627 residues long: Siderophore iron transporter ARN1 (627 aa).

At 1–70 (MESVHSRDPV…TEIIGSAYNK (70 aa)) the chain is on the extracellular side. The helical transmembrane segment at 71–91 (WYLQAILLLSAFICGYGYGLD) threads the bilayer. The Cytoplasmic segment spans residues 92-110 (GNIRYIYTGYATSSYSEHS). Residues 111–131 (LLSTINVINAVVSAASQIIYA) form a helical membrane-spanning segment. Topologically, residues 132-135 (RLSD) are extracellular. The helical transmembrane segment at 136-156 (VFGRLYLFISAVILYVVGTII) threads the bilayer. At 157-167 (QSQAYDVQRYA) the chain is on the cytoplasmic side. The chain crosses the membrane as a helical span at residues 168–188 (AGAIFYNAGYVGVILILLIIL). Residues 189-197 (SDFSSLKWR) lie on the Extracellular side of the membrane. A helical membrane pass occupies residues 198 to 218 (LLYQFVPTWPFIINTWIAGNI). Residues 219 to 231 (TSRANPVVNWSWD) are Cytoplasmic-facing. Residues 232-252 (VGMWAFIFPLSCVPIVLCMLH) form a helical membrane-spanning segment. Topologically, residues 253–290 (MQWRARKTPEWHALKGQKSYYQEHGFIKILKQLFWMLD) are extracellular. The helical transmembrane segment at 291–311 (VVGVLLMGCSLGCILVPLTLA) threads the bilayer. Topologically, residues 312–323 (GGVKTTWNDSRL) are cytoplasmic. A helical transmembrane segment spans residues 324–344 (IGPFVLGFVLIPILWIWEYRF). Residues 345 to 367 (ARDPILPYRLVKDRAVWSSMGIS) lie on the Extracellular side of the membrane. A helical membrane pass occupies residues 368-388 (FLIDFIYYMAADYLYTVMIVA). Residues 389 to 398 (VNESVKSATR) lie on the Cytoplasmic side of the membrane. Residues 399–419 (IATLSSFVSTVASPFFALLVT) traverse the membrane as a helical segment. Over 420–424 (RCTRL) the chain is Extracellular. A helical transmembrane segment spans residues 425–445 (KPFIMFGCALWMVAMGLLYHF). Topologically, residues 446–454 (RGGSQSHSG) are cytoplasmic. A helical transmembrane segment spans residues 455–475 (IIGALCVWGVGTTLFTYPVTV). Over 476–563 (SVQSAVSHEN…LMNAYKYVQR (88 aa)) the chain is Extracellular. The helical transmembrane segment at 564–584 (LETIVALVFCVPLIAFSLCLR) threads the bilayer. Over 585–627 (DPKLTDTVAVEYIEDGEYVDTKDNDPILDWFEKLPSKFTFKRE) the chain is Cytoplasmic.

It belongs to the major facilitator superfamily.

It localises to the cell membrane. The protein localises to the endosome membrane. Involved in the transport of siderophore ferrichrome and so has a role in iron homeostasis. This chain is Siderophore iron transporter ARN1 (ARN1), found in Saccharomyces cerevisiae (strain ATCC 204508 / S288c) (Baker's yeast).